We begin with the raw amino-acid sequence, 231 residues long: Uracil phosphoribosyltransferase (231 aa).

38 to 42 (KGLVR) serves as a coordination point for GTP. Residues Arg-87, Arg-112, and 140–148 (DPMIATGST) each bind 5-phospho-alpha-D-ribose 1-diphosphate. Residues Ile-203 and 208-210 (GDA) contribute to the uracil site. Residue Asp-209 coordinates 5-phospho-alpha-D-ribose 1-diphosphate.

This sequence belongs to the UPRTase family. Requires Mg(2+) as cofactor.

It catalyses the reaction UMP + diphosphate = 5-phospho-alpha-D-ribose 1-diphosphate + uracil. Its pathway is pyrimidine metabolism; UMP biosynthesis via salvage pathway; UMP from uracil: step 1/1. With respect to regulation, allosterically activated by GTP. Catalyzes the conversion of uracil and 5-phospho-alpha-D-ribose 1-diphosphate (PRPP) to UMP and diphosphate. The protein is Uracil phosphoribosyltransferase of Methanococcus maripaludis (strain C6 / ATCC BAA-1332).